A 371-amino-acid polypeptide reads, in one-letter code: Putative glutamate--cysteine ligase 2 (371 aa).

It belongs to the glutamate--cysteine ligase type 2 family. YbdK subfamily.

The enzyme catalyses L-cysteine + L-glutamate + ATP = gamma-L-glutamyl-L-cysteine + ADP + phosphate + H(+). In terms of biological role, ATP-dependent carboxylate-amine ligase which exhibits weak glutamate--cysteine ligase activity. This Burkholderia ambifaria (strain MC40-6) protein is Putative glutamate--cysteine ligase 2.